The primary structure comprises 302 residues: Arginase (302 aa).

Mn(2+) contacts are provided by H103, D126, H128, and D130. Substrate is bound by residues 128–132 (HGDLN), 139–141 (SGN), and D180. D229 and D231 together coordinate Mn(2+). T243 and E274 together coordinate substrate.

The protein belongs to the arginase family. Mn(2+) serves as cofactor.

The enzyme catalyses L-arginine + H2O = urea + L-ornithine. The protein operates within nitrogen metabolism; urea cycle; L-ornithine and urea from L-arginine: step 1/1. This is Arginase (arg) from Staphylococcus aureus (strain MRSA252).